Reading from the N-terminus, the 227-residue chain is Enolase-phosphatase E1 (227 aa).

It belongs to the HAD-like hydrolase superfamily. MasA/MtnC family. In terms of assembly, monomer. Requires Mg(2+) as cofactor.

The catalysed reaction is 5-methylsulfanyl-2,3-dioxopentyl phosphate + H2O = 1,2-dihydroxy-5-(methylsulfanyl)pent-1-en-3-one + phosphate. The protein operates within amino-acid biosynthesis; L-methionine biosynthesis via salvage pathway; L-methionine from S-methyl-5-thio-alpha-D-ribose 1-phosphate: step 3/6. It participates in amino-acid biosynthesis; L-methionine biosynthesis via salvage pathway; L-methionine from S-methyl-5-thio-alpha-D-ribose 1-phosphate: step 4/6. In terms of biological role, bifunctional enzyme that catalyzes the enolization of 2,3-diketo-5-methylthiopentyl-1-phosphate (DK-MTP-1-P) into the intermediate 2-hydroxy-3-keto-5-methylthiopentenyl-1-phosphate (HK-MTPenyl-1-P), which is then dephosphorylated to form the acireductone 1,2-dihydroxy-3-keto-5-methylthiopentene (DHK-MTPene). This Persephonella marina (strain DSM 14350 / EX-H1) protein is Enolase-phosphatase E1.